Here is a 752-residue protein sequence, read N- to C-terminus: MRKDVRIVLAGDPDVGKSTLITSLVKEAYVAKVQKVVPPITLPPEVAPEAVVTKIVDTSSSPEHRANLEAELRRANVICIVYSISAPSSFDRIPTYWLPYIRSLGVNVPVILVGNKIDLRSGDVTNAALEDELAPVMAEFKEVETCVECSARIPLNVSEVFYFAQKAVLYPTAPLYDSREHVLKPACVDALKRIFRLCDSDKDGLLSDGELNDFQRKCFDTPLQAQELEGIKDLVVQAPIAGLRYNHENSSVAASGSSANGDIPSHHPHLREGSLTMAGFLYLHTLFIQRGRLETTWTVLRTFGYGVDLSLQDSFVKPAFAVPPECSVELSPNGYQFLTDIFEVHDKDRDGALSEEELDSLFITAPDNRHPWQGTGFPTSTITDEHGAVTLQGWLAQWSMTTLLDHRTTLAYLAYLGYPSFPLSGSSGSASTPAPIPLTPTGPPGSRPSRNRTPCPPSTITALKLTRPRKTDKKKKGAIQRSVFLGFVLGAAGSGKTAILRNMVGKRFANAYEPTQKMMSVVSTVEQAGAERYLVLQEFGSRYEAEVLRNTAKLSAADVIVFVYDSSDTNSFSYISNLRQQYPLLQSMPSLFVATKADLDLAQQRHEVQPDTYCRKLGLKIPGLGAGPLNISIRDGQSADLYGLICTIAVDPKGAVQGGYDRNALSYGTNRWQFWGYIGLVVIGGGGAVWICAKVLKVPIGSTLGFGSSASTTSWWLSGAQARGAGGPNATKVSSWFDWIRWQSSSNVRSEL.

At 1-671 (MRKDVRIVLA…RNALSYGTNR (671 aa)) the chain is on the cytoplasmic side. A Miro 1 domain is found at 2–170 (RKDVRIVLAG…FYFAQKAVLY (169 aa)). GTP-binding positions include 11-18 (GDPDVGKS), 57-61 (DTSSS), and 115-118 (NKID). EF-hand domains lie at 186–221 (ACVD…CFDT) and 333–368 (NGYQ…APDN). The Ca(2+) site is built by D199, D201, D203, E210, D346, D348, D350, and E357. Residues 426–460 (SSGSASTPAPIPLTPTGPPGSRPSRNRTPCPPSTI) are disordered. Pro residues predominate over residues 434–446 (APIPLTPTGPPGS). One can recognise a Miro 2 domain in the interval 481–651 (RSVFLGFVLG…YGLICTIAVD (171 aa)). Residues 490-497 (GAAGSGKT), 526-530 (EQAGA), and 595-598 (TKAD) each bind GTP. A helical; Anchor for type IV membrane protein membrane pass occupies residues 672 to 692 (WQFWGYIGLVVIGGGGAVWIC). Over 693–752 (AKVLKVPIGSTLGFGSSASTTSWWLSGAQARGAGGPNATKVSSWFDWIRWQSSSNVRSEL) the chain is Mitochondrial intermembrane.

This sequence belongs to the mitochondrial Rho GTPase family.

Its subcellular location is the mitochondrion outer membrane. Its function is as follows. Mitochondrial GTPase involved in mitochondrial trafficking. Probably involved in control of anterograde transport of mitochondria and their subcellular distribution. This chain is Mitochondrial Rho GTPase 1 (GEM1), found in Mycosarcoma maydis (Corn smut fungus).